A 367-amino-acid chain; its full sequence is Glutamate 5-kinase (367 aa).

Lys-10 serves as a coordination point for ATP. The substrate site is built by Ser-50, Asp-137, and Asn-149. ATP contacts are provided by residues 169 to 170 and 211 to 217; these read TD and TGGMATK. In terms of domain architecture, PUA spans 275–353; that stretch reads AGEITVDDGA…QQISEILGYE (79 aa).

Belongs to the glutamate 5-kinase family.

The protein resides in the cytoplasm. The enzyme catalyses L-glutamate + ATP = L-glutamyl 5-phosphate + ADP. The protein operates within amino-acid biosynthesis; L-proline biosynthesis; L-glutamate 5-semialdehyde from L-glutamate: step 1/2. In terms of biological role, catalyzes the transfer of a phosphate group to glutamate to form L-glutamate 5-phosphate. This is Glutamate 5-kinase from Yersinia pseudotuberculosis serotype IB (strain PB1/+).